The primary structure comprises 89 residues: Small ribosomal subunit protein uS15 (89 aa).

Belongs to the universal ribosomal protein uS15 family. Part of the 30S ribosomal subunit. Forms a bridge to the 50S subunit in the 70S ribosome, contacting the 23S rRNA.

Functionally, one of the primary rRNA binding proteins, it binds directly to 16S rRNA where it helps nucleate assembly of the platform of the 30S subunit by binding and bridging several RNA helices of the 16S rRNA. In terms of biological role, forms an intersubunit bridge (bridge B4) with the 23S rRNA of the 50S subunit in the ribosome. The sequence is that of Small ribosomal subunit protein uS15 from Chlorobium limicola (strain DSM 245 / NBRC 103803 / 6330).